The primary structure comprises 356 residues: Magnesium-protoporphyrin IX monomethyl ester [oxidative] cyclase (356 aa).

The protein belongs to the AcsF family. It depends on Fe cation as a cofactor.

The catalysed reaction is Mg-protoporphyrin IX 13-monomethyl ester + 3 NADPH + 3 O2 + 2 H(+) = 3,8-divinyl protochlorophyllide a + 3 NADP(+) + 5 H2O. It participates in porphyrin-containing compound metabolism; chlorophyll biosynthesis (light-independent). Catalyzes the formation of the isocyclic ring in chlorophyll biosynthesis. Mediates the cyclase reaction, which results in the formation of divinylprotochlorophyllide (Pchlide) characteristic of all chlorophylls from magnesium-protoporphyrin IX 13-monomethyl ester (MgPMME). The chain is Magnesium-protoporphyrin IX monomethyl ester [oxidative] cyclase from Parasynechococcus marenigrum (strain WH8102).